A 183-amino-acid polypeptide reads, in one-letter code: Non-specific lipid transfer protein GPI-anchored 15 (183 aa).

A signal peptide spans 1–24 (MGYRRSYAITFVALVAALWSVTKA). 4 disulfide bridges follow: cysteine 30-cysteine 71, cysteine 40-cysteine 55, cysteine 56-cysteine 97, and cysteine 69-cysteine 107. N-linked (GlcNAc...) asparagine glycans are attached at residues asparagine 47 and asparagine 86. Residues 108–158 (NAATGPTAQPPAPSPTEKTPDVTLTPTSLPGARSGVGGGSKTVPSVGTGSS) are disordered. A compositionally biased stretch (polar residues) spans 149–158 (TVPSVGTGSS). A lipid anchor (GPI-anchor amidated serine) is attached at serine 158. Positions 159–183 (SRNVDPLPLHFLMFAVLVVCTSSFL) are cleaved as a propeptide — removed in mature form.

It belongs to the plant LTP family. As to expression, expressed in seedlings, preferentially in the endodermis of hypocotyls and roots. Also observed in siliques.

The protein resides in the cell membrane. In terms of biological role, probable lipid transfer protein. This Arabidopsis thaliana (Mouse-ear cress) protein is Non-specific lipid transfer protein GPI-anchored 15.